Consider the following 320-residue polypeptide: Acyl-coenzyme A thioesterase 8 (320 aa).

Active-site charge relay system residues include D233, S255, and Q305. The Microbody targeting signal signature appears at 318–320 (SKL).

The protein belongs to the C/M/P thioester hydrolase family. In terms of assembly, homodimer. Ubiquitous.

The protein localises to the peroxisome matrix. It carries out the reaction choloyl-CoA + H2O = cholate + CoA + H(+). The enzyme catalyses chenodeoxycholoyl-CoA + H2O = chenodeoxycholate + CoA + H(+). It catalyses the reaction acetyl-CoA + H2O = acetate + CoA + H(+). The catalysed reaction is malonyl-CoA + H2O = malonate + CoA + H(+). It carries out the reaction acetoacetyl-CoA + H2O = acetoacetate + CoA + H(+). The enzyme catalyses propanoyl-CoA + H2O = propanoate + CoA + H(+). It catalyses the reaction butanoyl-CoA + H2O = butanoate + CoA + H(+). The catalysed reaction is succinyl-CoA + H2O = succinate + CoA + H(+). It carries out the reaction glutaryl-CoA + H2O = glutarate + CoA + H(+). The enzyme catalyses hexanoyl-CoA + H2O = hexanoate + CoA + H(+). It catalyses the reaction hexanedioyl-CoA + H2O = hexanedioate + CoA + H(+). The catalysed reaction is octanoyl-CoA + H2O = octanoate + CoA + H(+). It carries out the reaction octanedioyl-CoA + H2O = octanedioate + CoA + H(+). The enzyme catalyses decanoyl-CoA + H2O = decanoate + CoA + H(+). It catalyses the reaction decanedioyl-CoA + H2O = decanedioate + CoA + H(+). The catalysed reaction is dodecanoyl-CoA + H2O = dodecanoate + CoA + H(+). It carries out the reaction dodecanedioyl-CoA + H2O = dodecanedioate + CoA + H(+). The enzyme catalyses tetradecanoyl-CoA + H2O = tetradecanoate + CoA + H(+). It catalyses the reaction (9Z)-tetradecenoyl-CoA + H2O = (9Z)-tetradecenoate + CoA + H(+). The catalysed reaction is hexadecanoyl-CoA + H2O = hexadecanoate + CoA + H(+). It carries out the reaction (9Z)-hexadecenoyl-CoA + H2O = (9Z)-hexadecenoate + CoA + H(+). The enzyme catalyses octadecanoyl-CoA + H2O = octadecanoate + CoA + H(+). It catalyses the reaction (9Z)-octadecenoyl-CoA + H2O = (9Z)-octadecenoate + CoA + H(+). The catalysed reaction is (9Z,12Z)-octadecadienoyl-CoA + H2O = (9Z,12Z)-octadecadienoate + CoA + H(+). It carries out the reaction eicosanoyl-CoA + H2O = eicosanoate + CoA + H(+). The enzyme catalyses (5Z,8Z,11Z,14Z)-eicosatetraenoyl-CoA + H2O = (5Z,8Z,11Z,14Z)-eicosatetraenoate + CoA + H(+). It catalyses the reaction 4,8-dimethylnonanoyl-CoA + H2O = 4,8-dimethylnonanoate + CoA + H(+). The catalysed reaction is 2,6-dimethylheptanoyl-CoA + H2O = 2,6-dimethylheptanoate + CoA + H(+). It carries out the reaction (3S)-3-hydroxy-3-methylglutaryl-CoA + H2O = 3-hydroxy-3-methylglutarate + CoA + H(+). The enzyme catalyses 3alpha,7alpha,12alpha-trihydroxy-5beta-cholestan-26-oyl-CoA + H2O = 3alpha,7alpha,12alpha-trihydroxy-5beta-cholestan-26-oate + CoA + H(+). It catalyses the reaction 2-methyloctadecanoyl-CoA + H2O = 2-methyloctadecanoate + CoA + H(+). The catalysed reaction is prostaglandin F2alpha-CoA + H2O = prostaglandin F2alpha + CoA + H(+). The protein operates within lipid metabolism; fatty acid metabolism. Inhibited by CoASH (IC(50)=10-15 uM). Also inhibited by cysteine-reactive agents. Its function is as follows. Catalyzes the hydrolysis of acyl-CoAs into free fatty acids and coenzyme A (CoASH), regulating their respective intracellular levels. Displays no strong substrate specificity with respect to the carboxylic acid moiety of Acyl-CoAs. Hydrolyzes medium length (C2 to C20) straight-chain, saturated and unsaturated acyl-CoAS but is inactive towards substrates with longer aliphatic chains. Moreover, it catalyzes the hydrolysis of CoA esters of bile acids, such as choloyl-CoA and chenodeoxycholoyl-CoA and competes with bile acid CoA:amino acid N-acyltransferase (BAAT). Is also able to hydrolyze CoA esters of dicarboxylic acids. It is involved in the metabolic regulation of peroxisome proliferation. This chain is Acyl-coenzyme A thioesterase 8 (Acot8), found in Mus musculus (Mouse).